The sequence spans 155 residues: MSRRGTAEEKTAKSDPIYRNRLVNMLVNRILKHGKKSLAYQIIYRAVKKIQQKTETNPLSVLRQAIHGVTPGIAVKARRVGGSTQQVPIEIGSTQGKALAIRWLLAASRKRPGRNMAFKLSSELVDAAKGSGDAIRKREETHKMAESNRAFAHFR.

The protein belongs to the universal ribosomal protein uS7 family. Part of the 30S ribosomal subunit.

It is found in the plastid. It localises to the chloroplast. Its function is as follows. One of the primary rRNA binding proteins, it binds directly to 16S rRNA where it nucleates assembly of the head domain of the 30S subunit. This is Small ribosomal subunit protein uS7cz/uS7cy (rps7-A) from Lactuca sativa (Garden lettuce).